The sequence spans 369 residues: Variable large protein 7 (369 aa).

Positions 1–26 (MRKRISAIINKLNISIIIMTVVLMIG) are cleaved as a signal peptide. Cys27 carries N-palmitoyl cysteine lipidation. Cys27 carries S-diacylglycerol cysteine lipidation.

Belongs to the variable large protein (Vlp) family. Alpha subfamily.

The protein resides in the cell outer membrane. Functionally, the Vlp and Vsp proteins are antigenically distinct proteins, only one vlp or vsp gene is transcriptionally active at any one time. Switching between these genes is a mechanism of host immune response evasion. In Borrelia hermsii, this protein is Variable large protein 7.